A 424-amino-acid polypeptide reads, in one-letter code: Glutamate-1-semialdehyde 2,1-aminomutase (424 aa).

N6-(pyridoxal phosphate)lysine is present on K258.

Belongs to the class-III pyridoxal-phosphate-dependent aminotransferase family. HemL subfamily. Requires pyridoxal 5'-phosphate as cofactor.

Its subcellular location is the cytoplasm. The catalysed reaction is (S)-4-amino-5-oxopentanoate = 5-aminolevulinate. Its pathway is porphyrin-containing compound metabolism; protoporphyrin-IX biosynthesis; 5-aminolevulinate from L-glutamyl-tRNA(Glu): step 2/2. This Pyrobaculum islandicum (strain DSM 4184 / JCM 9189 / GEO3) protein is Glutamate-1-semialdehyde 2,1-aminomutase.